The chain runs to 302 residues: Nucleotide-binding protein Bcenmc03_2806 (302 aa).

8 to 15 lines the ATP pocket; the sequence is GISGSGKS. 57–60 contributes to the GTP binding site; it reads DARS.

This sequence belongs to the RapZ-like family.

Its function is as follows. Displays ATPase and GTPase activities. This is Nucleotide-binding protein Bcenmc03_2806 from Burkholderia orbicola (strain MC0-3).